Consider the following 61-residue polypeptide: Large ribosomal subunit protein eL24 (61 aa).

Zn(2+) is bound by residues Cys-7, Cys-10, Cys-33, and Cys-37. A C4-type zinc finger spans residues 7–37 (CSFCGHEIPPGTGLMYVRNDGTMLWFCSSKC).

It belongs to the eukaryotic ribosomal protein eL24 family. Part of the 50S ribosomal subunit. Forms a cluster with proteins L3 and L14. Zn(2+) serves as cofactor.

Binds to the 23S rRNA. This chain is Large ribosomal subunit protein eL24, found in Saccharolobus islandicus (strain M.16.27) (Sulfolobus islandicus).